Reading from the N-terminus, the 730-residue chain is Wall-associated receptor kinase-like 1 (730 aa).

Residues 1–25 form the signal peptide; sequence MKTKTSIFQFIVASVLTLLINDSSA. At 26 to 358 the chain is on the extracellular side; it reads ATPPPPISNS…KPTKPPVLQG (333 aa). Residues N34, N40, N70, N77, N92, N119, N132, N211, N233, N269, and N281 are each glycosylated (N-linked (GlcNAc...) asparagine). An atypical EGF-like region spans residues 282 to 341; sequence CSCEYDYFSGMSYRNCYCDYGYTGNPYLRGGCVDTDSCEGNHNCGEDAHCVNMPGPMSMC. 3 cysteine pairs are disulfide-bonded: C284–C297, C319–C331, and C325–C341. The helical transmembrane segment at 359-379 threads the bilayer; it reads ILIGLSGLVFFVGLFWLFKLI. Over 380–730 the chain is Cytoplasmic; that stretch reads KKRRNINRSK…DQPMAINNKR (351 aa). The region spanning 429 to 702 is the Protein kinase domain; that stretch reads FSIDRVLGQG…KEVSNELERI (274 aa). Residues 435–443 and K457 contribute to the ATP site; that span reads LGQGGQGTV. Y502 bears the Phosphotyrosine mark. D554 functions as the Proton acceptor in the catalytic mechanism. Phosphothreonine occurs at positions 588 and 593. A Phosphotyrosine modification is found at Y601. Residues 685–730 are disordered; the sequence is KGKNRPNMKEVSNELERIRSSPEDLDVRTENEDEEEDQPMAINNKR. Positions 691–714 are enriched in basic and acidic residues; the sequence is NMKEVSNELERIRSSPEDLDVRTE.

Belongs to the protein kinase superfamily. Ser/Thr protein kinase family. As to expression, preferentially expressed in roots and flowers.

The protein resides in the membrane. It carries out the reaction L-seryl-[protein] + ATP = O-phospho-L-seryl-[protein] + ADP + H(+). The enzyme catalyses L-threonyl-[protein] + ATP = O-phospho-L-threonyl-[protein] + ADP + H(+). Its function is as follows. Serine/threonine-protein kinase that may function as a signaling receptor of extracellular matrix component. The chain is Wall-associated receptor kinase-like 1 (WAKL1) from Arabidopsis thaliana (Mouse-ear cress).